Consider the following 233-residue polypeptide: tRNA (guanine-N(7)-)-methyltransferase (233 aa).

The interval 1 to 22 is disordered; that stretch reads MIDENHPMRAAGNFFGRRHGKP. Residues Glu64, Glu89, Asp116, and Asp138 each contribute to the S-adenosyl-L-methionine site. The active site involves Asp138. Substrate-binding positions include Lys142, Asp174, and 212 to 215; that span reads TRYE.

It belongs to the class I-like SAM-binding methyltransferase superfamily. TrmB family.

It carries out the reaction guanosine(46) in tRNA + S-adenosyl-L-methionine = N(7)-methylguanosine(46) in tRNA + S-adenosyl-L-homocysteine. Its pathway is tRNA modification; N(7)-methylguanine-tRNA biosynthesis. In terms of biological role, catalyzes the formation of N(7)-methylguanine at position 46 (m7G46) in tRNA. The sequence is that of tRNA (guanine-N(7)-)-methyltransferase from Brucella melitensis biotype 1 (strain ATCC 23456 / CCUG 17765 / NCTC 10094 / 16M).